We begin with the raw amino-acid sequence, 403 residues long: Argininosuccinate synthase (403 aa).

ATP is bound by residues 13-21 (AYSGGLDTS) and alanine 40. Residues tyrosine 91 and serine 96 each coordinate L-citrulline. Residue glycine 121 participates in ATP binding. 3 residues coordinate L-aspartate: threonine 123, asparagine 127, and aspartate 128. Asparagine 127 is a binding site for L-citrulline. The L-citrulline site is built by arginine 131, serine 180, serine 189, glutamate 265, and tyrosine 277.

This sequence belongs to the argininosuccinate synthase family. Type 1 subfamily. Homotetramer.

It is found in the cytoplasm. It carries out the reaction L-citrulline + L-aspartate + ATP = 2-(N(omega)-L-arginino)succinate + AMP + diphosphate + H(+). It functions in the pathway amino-acid biosynthesis; L-arginine biosynthesis; L-arginine from L-ornithine and carbamoyl phosphate: step 2/3. The polypeptide is Argininosuccinate synthase (Leptospira borgpetersenii serovar Hardjo-bovis (strain JB197)).